A 372-amino-acid chain; its full sequence is Biglycan (372 aa).

An N-terminal signal peptide occupies residues 1–19; that stretch reads MPTMWPLWLLASLLALSQA. The propeptide occupies 20 to 40; it reads LPFEQKGFWDFTLDDGLPMLN. Ser45 and Ser51 each carry an O-linked (Xyl...) (glycosaminoglycan) serine glycan. Intrachain disulfides connect Cys67–Cys73 and Cys71–Cys80. 12 LRR repeats span residues 86–106, 107–130, 131–154, 155–175, 176–199, 200–224, 225–245, 246–269, 270–293, 294–316, 317–346, and 347–372; these read KAVP…NNEI, SELR…NNKI, SKIH…KNHL, VEIP…DNRI, RKVP…GNPL, ENSG…EAKL, TGIP…HNKI, QAIE…HNQI, RMIE…NNKL, SRVP…TNNI, TKVG…NNPV, and PYWE…NYKK. 2 N-linked (GlcNAc...) asparagine glycosylation sites follow: Asn274 and Asn315. Residues Cys325 and Cys358 are joined by a disulfide bond.

Belongs to the small leucine-rich proteoglycan (SLRP) family. SLRP class I subfamily. As to quaternary structure, homodimer. Forms a ternary complex with MFAP2 and ELN. In terms of processing, the two attached glycosaminoglycan chains can be either chondroitin sulfate or dermatan sulfate.

The protein resides in the secreted. It is found in the extracellular space. Its subcellular location is the extracellular matrix. In terms of biological role, may be involved in collagen fiber assembly. In Equus caballus (Horse), this protein is Biglycan (BGN).